The sequence spans 253 residues: Chromosome-partitioning ATPase Soj (253 aa).

Positions 11, 12, 13, 14, 15, 16, 17, 18, 211, and 213 each coordinate ATP. Thr-17 is a binding site for Mg(2+).

This sequence belongs to the ParA family.

It carries out the reaction ATP + H2O = ADP + phosphate + H(+). Functionally, ATPase probably involved in chromosome partitioning. Cooperatively binds dsDNA, forming nucleoprotein filaments in a strictly ATP-dependent fashion. The chain is Chromosome-partitioning ATPase Soj from Treponema pallidum (strain Nichols).